We begin with the raw amino-acid sequence, 293 residues long: Porphobilinogen deaminase (293 aa).

C235 bears the S-(dipyrrolylmethanemethyl)cysteine mark.

It belongs to the HMBS family. Monomer. It depends on dipyrromethane as a cofactor.

It carries out the reaction 4 porphobilinogen + H2O = hydroxymethylbilane + 4 NH4(+). The protein operates within porphyrin-containing compound metabolism; protoporphyrin-IX biosynthesis; coproporphyrinogen-III from 5-aminolevulinate: step 2/4. Its function is as follows. Tetrapolymerization of the monopyrrole PBG into the hydroxymethylbilane pre-uroporphyrinogen in several discrete steps. In Ruminiclostridium cellulolyticum (strain ATCC 35319 / DSM 5812 / JCM 6584 / H10) (Clostridium cellulolyticum), this protein is Porphobilinogen deaminase.